The chain runs to 75 residues: Large ribosomal subunit protein bL28 (75 aa).

Belongs to the bacterial ribosomal protein bL28 family.

This is Large ribosomal subunit protein bL28 from Buchnera aphidicola subsp. Acyrthosiphon pisum (strain APS) (Acyrthosiphon pisum symbiotic bacterium).